The following is a 47-amino-acid chain: DICTNCCAGTKGCNTTSANGAFICEGQSDPKKPKACPLNCDPHIAYA.

3 disulfide bridges follow: cysteine 3-cysteine 40, cysteine 6-cysteine 24, and cysteine 7-cysteine 36.

Its function is as follows. Inhibitor of serine proteases chymotrypsin, papain and trypsin. Has strong antifungal activity against C.albicans and R.solani. Has antibacterial activity against the Gram-positive bacterium C.michiganense, but lacks antibacterial activity against the Gram-positive bacterium S.aureus. Lacks hemolytic activity against human erythrocytes. The protein is Potamin-1 of Solanum tuberosum (Potato).